The primary structure comprises 1029 residues: Sodium/potassium-transporting ATPase subunit alpha-4 (1029 aa).

Residues 1–37 are disordered; that stretch reads MGLWGKKGTVAPHDQSPRRRPKKGLIKKKMVKREKQK. Over 1–95 the chain is Cytoplasmic; the sequence is MGLWGKKGTV…NTVTPPPTTP (95 aa). The segment covering 18–36 has biased composition (basic residues); the sequence is RRRPKKGLIKKKMVKREKQ. Residues 90–92 are interaction with phosphoinositide-3 kinase; the sequence is PPP. Residues 96-116 form a helical membrane-spanning segment; that stretch reads EWVKFCKQLFGGFSLLLWTGA. Residues 117–139 lie on the Extracellular side of the membrane; sequence ILCFVAYSIQIYFNEEPTKDNLY. The helical transmembrane segment at 140-160 threads the bilayer; it reads LSIVLSVVVIVTGCFSYYQEA. The Cytoplasmic segment spans residues 161–296; sequence KSSKIMESFK…VGQTPIAAEI (136 aa). A compositionally biased stretch (polar residues) spans 223–237; sequence NSSLTGESEPQSRSP. Positions 223 to 242 are disordered; the sequence is NSSLTGESEPQSRSPDFTHE. The helical transmembrane segment at 297-316 threads the bilayer; sequence EHFIHLITVVAVFLGVTFFA. The Extracellular segment spans residues 317–328; that stretch reads LSLLLGYGWLEA. A helical transmembrane segment spans residues 329-346; it reads IIFLIGIIVANVPEGLLA. Residues 347–778 lie on the Cytoplasmic side of the membrane; the sequence is TVTVCLTLTA…EEGRLIFDNL (432 aa). Asp384 acts as the 4-aspartylphosphate intermediate in catalysis. Residues Asp723 and Asp727 each coordinate Mg(2+). A helical transmembrane segment spans residues 779 to 798; that stretch reads KKSIMYTLTSNIPEITPFLM. Over 799–808 the chain is Extracellular; the sequence is FIILGIPLPL. A helical membrane pass occupies residues 809–829; sequence GTITILCIDLGTDMVPAISLA. Over 830–849 the chain is Cytoplasmic; it reads YESAESDIMKRLPRNPKTDN. The helical transmembrane segment at 850–872 threads the bilayer; it reads LVNHRLIGMAYGQIGMIQALAGF. Residues 873-924 lie on the Extracellular side of the membrane; that stretch reads FTYFVILAENGFRPVDLLGIRLHWEDKYLNDLEDSYGQQWTYEQRKVVEFTC. Residues 925-944 traverse the membrane as a helical segment; that stretch reads QTAFFVTIVVVQWADLIISK. Topologically, residues 945 to 957 are cytoplasmic; sequence TRRNSLFQQGMRN. Phosphoserine; by PKA is present on Ser949. Residues 958–976 traverse the membrane as a helical segment; the sequence is KVLIFGILEETLLAAFLSY. At 977 to 991 the chain is on the extracellular side; that stretch reads TPGMDVALRMYPLKI. The chain crosses the membrane as a helical span at residues 992–1012; it reads TWWLCAIPYSILIFVYDEIRK. At 1013 to 1029 the chain is on the cytoplasmic side; sequence LLIRQHPDGWVERETYY.

This sequence belongs to the cation transport ATPase (P-type) (TC 3.A.3) family. Type IIC subfamily. In terms of assembly, the sodium/potassium-transporting ATPase is composed of a catalytic alpha subunit, an auxiliary non-catalytic beta subunit and an additional regulatory subunit. In terms of tissue distribution, specifically expressed in testis. Found in very low levels in skeletal muscle. Expressed in mature sperm (at protein level).

The protein resides in the cell membrane. The catalysed reaction is K(+)(out) + Na(+)(in) + ATP + H2O = K(+)(in) + Na(+)(out) + ADP + phosphate + H(+). With respect to regulation, specifically inhibited by an endogenous cardiac glycoside, ouabain. Its function is as follows. This is the catalytic component of the active enzyme, which catalyzes the hydrolysis of ATP coupled with the exchange of sodium and potassium ions across the plasma membrane. This action creates the electrochemical gradient of sodium and potassium ions, providing the energy for active transport of various nutrients. Plays a role in sperm motility. This chain is Sodium/potassium-transporting ATPase subunit alpha-4, found in Homo sapiens (Human).